A 533-amino-acid chain; its full sequence is Multicopper oxidase CueO (533 aa).

Positions 1-28 (MHRRDFLKLTAALGAATSLPLWSRAALA) form a signal peptide, tat-type signal. Plastocyanin-like domains lie at 53 to 166 (QTGS…IDDS), 221 to 290 (PYPQ…DTRD), and 416 to 532 (AFNF…FTVS). Cu cation contacts are provided by His-102, His-104, His-142, and His-144. Cu cation is bound by residues His-458, His-461, His-463, His-514, Cys-515, His-516, and His-520.

It belongs to the multicopper oxidase family. Monomer. It depends on Cu cation as a cofactor. In terms of processing, predicted to be exported by the Tat system. The position of the signal peptide cleavage has not been experimentally proven.

The protein resides in the periplasm. The enzyme catalyses 4 Cu(+) + O2 + 4 H(+) = 4 Cu(2+) + 2 H2O. Multicopper oxidase involved in copper homeostasis and copper tolerance under aerobic conditions. Is responsible for the oxidation of Cu(+) to the less harmful Cu(2+) in the periplasm, thereby preventing Cu(+) from entering the cytoplasm. The chain is Multicopper oxidase CueO (cueO) from Yersinia pestis.